We begin with the raw amino-acid sequence, 443 residues long: ATP-dependent protease ATPase subunit HslU (443 aa).

ATP contacts are provided by residues isoleucine 20, 62 to 67, aspartate 255, glutamate 321, and arginine 393; that span reads GVGKTE.

The protein belongs to the ClpX chaperone family. HslU subfamily. As to quaternary structure, a double ring-shaped homohexamer of HslV is capped on each side by a ring-shaped HslU homohexamer. The assembly of the HslU/HslV complex is dependent on binding of ATP.

The protein localises to the cytoplasm. Functionally, ATPase subunit of a proteasome-like degradation complex; this subunit has chaperone activity. The binding of ATP and its subsequent hydrolysis by HslU are essential for unfolding of protein substrates subsequently hydrolyzed by HslV. HslU recognizes the N-terminal part of its protein substrates and unfolds these before they are guided to HslV for hydrolysis. The protein is ATP-dependent protease ATPase subunit HslU of Helicobacter acinonychis (strain Sheeba).